Reading from the N-terminus, the 501-residue chain is Glutathione gamma-glutamylcysteinyltransferase 1 (501 aa).

The region spanning 1–221 (MAMAGLYRRL…GFMLISRPHR (221 aa)) is the Peptidase C83 domain. Catalysis depends on residues Cys-56, His-162, and Asp-180.

It belongs to the phytochelatin synthase family. Expressed in roots, nodules and leaves.

The enzyme catalyses [Glu(-Cys)](n)-Gly + glutathione + H(+) = [Glu(-Cys)](n+1)-Gly + glycine. Requires cadmium for activity. Also activated in vitro by Zn(2+), Cu(2+), Fe(2+) or Fe(3+) ions, but not by Co(2+) or Ni(2+) ions. Involved in the synthesis of phytochelatins (PC) and homophytochelatins (hPC), the heavy-metal-binding peptides of plants. The protein is Glutathione gamma-glutamylcysteinyltransferase 1 (PCS1) of Lotus japonicus (Lotus corniculatus var. japonicus).